Consider the following 217-residue polypeptide: Aprataxin-like protein (217 aa).

Residues 6 to 139 (ALKNYVTSPE…HIHVISKDFH (134 aa)) enclose the HIT domain. Interaction with DNA stretches follow at residues 34-38 (DSFPK), 121-132 (HSVPSMANLHIH), and 144-148 (KNKKH). The active-site Nucleophile is H130. The Zn(2+) site is built by C188, C191, H205, and E209.

The protein localises to the nucleus. Its subcellular location is the cytoplasm. The catalysed reaction is a 5'-end adenosine-5'-diphospho-5'-2'-deoxyribonucleoside-DNA + H2O = a 5'-end 5'-phospho-2'-deoxyribonucleoside-DNA + AMP + 2 H(+). The enzyme catalyses a 5'-end adenosine-5'-diphospho-5'-ribonucleoside-2'-deoxyribonucleotide-DNA + H2O = a 5'-end 5'-phospho-ribonucleoside-2'-deoxyribonucleotide-DNA + AMP + 2 H(+). It catalyses the reaction a 3'-end 2'-deoxyribonucleotide-3'-diphospho-5'-guanosine-DNA + H2O = a 3'-end 2'-deoxyribonucleotide 3'-phosphate-DNA + GMP + 2 H(+). Functionally, DNA-binding protein involved in single-strand DNA break repair, double-strand DNA break repair and base excision repair. Resolves abortive DNA ligation intermediates formed either at base excision sites, or when DNA ligases attempt to repair non-ligatable breaks induced by reactive oxygen species. Catalyzes the release of adenylate groups covalently linked to 5'-phosphate termini, resulting in the production of 5'-phosphate termini that can be efficiently rejoined. Likewise, catalyzes the release of 3'-linked guanosine (DNAppG) and inosine (DNAppI) from DNA, but has higher specific activity with 5'-linked adenosine (AppDNA). This is Aprataxin-like protein (HNT3) from Saccharomyces cerevisiae (strain ATCC 204508 / S288c) (Baker's yeast).